The primary structure comprises 307 residues: MRIIFAGTPDFAVPSLRAAAQRHEVVAVYTQPDRPAGRGRGLTPSPVKLEAVARGIPVFQPQTLRSPEALATVRKLDADLMVVVAYGLILPKAVLAAPTHGCWNVHASLLPRWRGAAPIQRAIEAGDTETGVCLMQMEAGLDTGPVLLSQRIEIGEQETGGQLHDRLAALGAQVLSDGLGLLRAGIRPVAQPQPDDGVTYAHKLDKAQARLDWAQPAQELARRVRAFNPWPVAEAILAGERVRLHGAVALELAHQHPPGTLLAASKQGIDIACGEGALRVRVLQREGGKAITAADYLNARRDLPALR.

108-111 (SLLP) contributes to the (6S)-5,6,7,8-tetrahydrofolate binding site.

This sequence belongs to the Fmt family.

The enzyme catalyses L-methionyl-tRNA(fMet) + (6R)-10-formyltetrahydrofolate = N-formyl-L-methionyl-tRNA(fMet) + (6S)-5,6,7,8-tetrahydrofolate + H(+). Attaches a formyl group to the free amino group of methionyl-tRNA(fMet). The formyl group appears to play a dual role in the initiator identity of N-formylmethionyl-tRNA by promoting its recognition by IF2 and preventing the misappropriation of this tRNA by the elongation apparatus. The polypeptide is Methionyl-tRNA formyltransferase (Xanthomonas euvesicatoria pv. vesicatoria (strain 85-10) (Xanthomonas campestris pv. vesicatoria)).